The sequence spans 296 residues: Enoyl-CoA hydratase AFT3-1 (296 aa).

The short motif at 294–296 is the Peroxisomal targeting signal type 1 element; the sequence is PKL.

Belongs to the enoyl-CoA hydratase/isomerase family.

It localises to the peroxisome. The enzyme catalyses a (3S)-3-hydroxyacyl-CoA = a (2E)-enoyl-CoA + H2O. It catalyses the reaction a 4-saturated-(3S)-3-hydroxyacyl-CoA = a (3E)-enoyl-CoA + H2O. The protein operates within mycotoxin biosynthesis. Enoyl-CoA hydratase; part of the gene clusters that mediate the biosynthesis of the host-selective toxins (HSTs) AF-toxins responsible for Alternaria black spot of strawberry disease by the strawberry pathotype. AF-toxin I and III are valine derivatives of 2,3-dyhydroxy-isovaleric acid and 2-hydroxy-isovaleric acid respectively, while AF II is an isoleucine derivative of 2-hydroxy-valeric acid. These derivatives are bound to a 9,10-epoxy-8-hydroxy-9-methyl-decatrienoic acid (EDA) moiety. On cellular level, AF-toxins affect plasma membrane of susceptible cells and cause a sudden increase in loss of K(+) after a few minutes of toxin treatment. The aldo-keto reductase AFTS1 catalyzes the conversion of 2-keto-isovaleric acid (2-KIV) to 2-hydroxy-isovaleric acid (2-HIV) by reduction of its ketone to an alcohol. The acyl-CoA ligase AFT1, the hydrolase AFT2 and the enoyl-CoA hydratases AFT3 and AFT6, but also the polyketide synthase AFT9, the acyl-CoA dehydrogenase AFT10, the cytochrome P450 monooxygenase AFT11 and the oxidoreductase AFT12 are all involved in the biosynthesis of the AK-, AF- and ACT-toxin common EDA structural moiety. The exact function of each enzyme, and of additional enzymes identified within the AF-toxin clusters have still to be determined. This chain is Enoyl-CoA hydratase AFT3-1 (AFT3-1), found in Alternaria alternata (Alternaria rot fungus).